The chain runs to 131 residues: Secreted RxLR effector protein 45 (131 aa).

The signal sequence occupies residues 1–16 (MSIFIFISLVLGLAHQ). Residues 56 to 59 (RPLR) carry the RxLR motif. The N-linked (GlcNAc...) asparagine glycan is linked to Asn128.

This sequence belongs to the RxLR effector family.

Its subcellular location is the secreted. It is found in the host nucleus. Functionally, secreted effector that completely suppresses the host cell death induced by cell death-inducing proteins. The polypeptide is Secreted RxLR effector protein 45 (Plasmopara viticola (Downy mildew of grapevine)).